The sequence spans 27 residues: C-reactive protein P1 (27 aa).

A disordered region spans residues 1 to 27 (IPQDLSGKMLTFPKEEDDDDVKLMTPK). A Pentraxin (PTX) domain is found at 6 to 27 (SGKMLTFPKEEDDDDVKLMTPK).

The protein belongs to the pentraxin family. In terms of assembly, homopentamer. Pentraxin (or pentaxin) have a discoid arrangement of 5 non-covalently bound subunits. Exists as a dimer under reducing conditions. The cofactor is Ca(2+). Post-translationally, glycosylated.

Its subcellular location is the secreted. Functionally, displays several functions associated with host defense: it promotes agglutination, bacterial capsular swelling, phagocytosis, and complement fixation through its calcium-dependent binding to phosphorylcholine. The sequence is that of C-reactive protein P1 from Gadus morhua (Atlantic cod).